The following is a 463-amino-acid chain: MRVLFCSSEIYPYAKTGGLADFSFCLIKYLKKYGVKVKGVMPYYKTLKAENLRKTDKGVTLNLNGKDYTFEVYESEDCYFLRNDELFGRDYIYGPPGWGYEDNDIRFGGFSRAVSELISTGQLEADVVHANDWQTALIPLFLKEVFKTPVKTVFTIHNLAYQGLFPKETVERVGIPPYLFHMEAVEFWGLVNFMKGGIVFSDLITTVSPTYAKEIQTQEYGYGLEGVLKKYSYKLRGILNGIDYEVWNPEKDKYIYQNYSLRNYSKKFKNKEFLSKELGIEAEKPLISFINRFTHQKGVELILNCAEEMSKLNANFVFLGTGEYENAFLDVSKIYKNFKVFAEFNEGFARKLYASSDFILMPSYFEPCGLTQMIGMRYGCVPIVRKTGGLRDTVKDISEGGYGITFEEPSKETFLCSLKRAIELYENAKKFRNSVKIVMSLDFSCDRMTKEYIECYEEVQSHQ.

K15 is a binding site for ADP-alpha-D-glucose.

The protein belongs to the glycosyltransferase 1 family. Bacterial/plant glycogen synthase subfamily.

The enzyme catalyses [(1-&gt;4)-alpha-D-glucosyl](n) + ADP-alpha-D-glucose = [(1-&gt;4)-alpha-D-glucosyl](n+1) + ADP + H(+). It participates in glycan biosynthesis; glycogen biosynthesis. In terms of biological role, synthesizes alpha-1,4-glucan chains using ADP-glucose. This Aquifex aeolicus (strain VF5) protein is Glycogen synthase.